The sequence spans 218 residues: Protein GrpE (218 aa).

The segment covering 1–10 (MSGEASTPAQ) has biased composition (polar residues). Disordered regions lie at residues 1-44 (MSGE…DPAE) and 198-218 (SMGP…AEDS). Low complexity predominate over residues 200–218 (GPGPSADAEGAASAEAEDS).

It belongs to the GrpE family. Homodimer.

It localises to the cytoplasm. Its function is as follows. Participates actively in the response to hyperosmotic and heat shock by preventing the aggregation of stress-denatured proteins, in association with DnaK and GrpE. It is the nucleotide exchange factor for DnaK and may function as a thermosensor. Unfolded proteins bind initially to DnaJ; upon interaction with the DnaJ-bound protein, DnaK hydrolyzes its bound ATP, resulting in the formation of a stable complex. GrpE releases ADP from DnaK; ATP binding to DnaK triggers the release of the substrate protein, thus completing the reaction cycle. Several rounds of ATP-dependent interactions between DnaJ, DnaK and GrpE are required for fully efficient folding. In Parasynechococcus marenigrum (strain WH8102), this protein is Protein GrpE.